The sequence spans 482 residues: Exodeoxyribonuclease 7 large subunit (482 aa).

A disordered region spans residues 457-482; sequence TLDTGGAPAKPASKPKQKPPEQGSLF.

This sequence belongs to the XseA family. In terms of assembly, heterooligomer composed of large and small subunits.

The protein localises to the cytoplasm. The catalysed reaction is Exonucleolytic cleavage in either 5'- to 3'- or 3'- to 5'-direction to yield nucleoside 5'-phosphates.. Its function is as follows. Bidirectionally degrades single-stranded DNA into large acid-insoluble oligonucleotides, which are then degraded further into small acid-soluble oligonucleotides. The sequence is that of Exodeoxyribonuclease 7 large subunit from Ruegeria pomeroyi (strain ATCC 700808 / DSM 15171 / DSS-3) (Silicibacter pomeroyi).